Reading from the N-terminus, the 249-residue chain is Probable transcriptional regulatory protein mll3945 (249 aa).

The protein belongs to the TACO1 family.

Its subcellular location is the cytoplasm. This is Probable transcriptional regulatory protein mll3945 from Mesorhizobium japonicum (strain LMG 29417 / CECT 9101 / MAFF 303099) (Mesorhizobium loti (strain MAFF 303099)).